A 504-amino-acid polypeptide reads, in one-letter code: Maturase K (504 aa).

This sequence belongs to the intron maturase 2 family. MatK subfamily.

The protein localises to the plastid. The protein resides in the chloroplast. Functionally, usually encoded in the trnK tRNA gene intron. Probably assists in splicing its own and other chloroplast group II introns. This Fagus hayatae (Formosan elm) protein is Maturase K.